The primary structure comprises 421 residues: MSKLTIVRGFNDVLPLDSYKWQLLESKVKLILDRYNYSETRLPIVERSELFHRSVGESSDIVSKETYDFQDRNGDSLTLRPEGTAGCVRMVIENNLATRGQTQKLWYCGPMFRYERPQKGRYRQFYQLGVEAYGFDGIAIDLEVIAIAWSLFKELGISEYVTLELNSLGSSLNRQEYTQALLQYLKPYHAELDEDSIKRLDKNPLRILDSKIEKTQKILANAPKLIDFIDHDLRLRFKQTCQYLDALGVRYKLNENLVRGLDYYTGLVFEWTTDKLGSQSAICAGGRYDGLVENLGGQKTAAIGFAIGMERLLLLLEDLGKLPNQDNACDVFFILDSAQLHQSLAIVENIRQELPQLKIDMDLKFGSFKSQFKKADKSGAKVAIIIGQDELDNGFAGIKFLQQNEEQQQVAFNELINFLER.

The protein belongs to the class-II aminoacyl-tRNA synthetase family. As to quaternary structure, homodimer.

Its subcellular location is the cytoplasm. It catalyses the reaction tRNA(His) + L-histidine + ATP = L-histidyl-tRNA(His) + AMP + diphosphate + H(+). This is Histidine--tRNA ligase from Francisella tularensis subsp. mediasiatica (strain FSC147).